The following is a 617-amino-acid chain: Chaperone protein HscA homolog (617 aa).

The protein belongs to the heat shock protein 70 family.

Its function is as follows. Probable chaperone. Has a low intrinsic ATPase activity which is markedly stimulated by HscB. The sequence is that of Chaperone protein HscA homolog from Vibrio parahaemolyticus serotype O3:K6 (strain RIMD 2210633).